The sequence spans 238 residues: Ciliary microtubule associated protein 1B (238 aa).

The STPGR repeat unit spans residues 182–207 (PGPCAYHVVNPMIYKTRAPQFTMLGR). The interval 206–238 (GRTLPPRENTKKPGPASYSVDKVVWSRGSRGRG) is disordered.

The protein belongs to the CIMAP family.

It localises to the cell projection. The protein resides in the cilium. It is found in the flagellum. The sequence is that of Ciliary microtubule associated protein 1B (Cimap1b) from Mus musculus (Mouse).